The sequence spans 279 residues: Thymidylate synthase (279 aa).

A dUMP-binding site is contributed by 141–142 (RR). The active-site Nucleophile is the cysteine 161. Residues 181–184 (RSND), asparagine 192, and 222–224 (HVY) each bind dUMP. A (6R)-5,10-methylene-5,6,7,8-tetrahydrofolate-binding site is contributed by aspartate 184. (6R)-5,10-methylene-5,6,7,8-tetrahydrofolate is bound at residue alanine 278.

It belongs to the thymidylate synthase family. As to quaternary structure, homodimer.

The enzyme catalyses dUMP + (6R)-5,10-methylene-5,6,7,8-tetrahydrofolate = 7,8-dihydrofolate + dTMP. Its pathway is pyrimidine metabolism; dTTP biosynthesis. Provides the sole de novo source of dTMP for DNA biosynthesis. The sequence is that of Thymidylate synthase (thyP3) from Bacillus subtilis (Bacteriophage phi-3T).